Reading from the N-terminus, the 276-residue chain is Undecaprenyl-diphosphatase (276 aa).

A run of 6 helical transmembrane segments spans residues 43–63 (RAMA…VWEF), 85–105 (ANLL…ADLI), 109–129 (LFNP…MLWA), 183–203 (AATE…AVYS), 214–234 (SDLP…MIAV), and 249–269 (FAWY…FGWV).

Belongs to the UppP family.

It localises to the cell inner membrane. It catalyses the reaction di-trans,octa-cis-undecaprenyl diphosphate + H2O = di-trans,octa-cis-undecaprenyl phosphate + phosphate + H(+). Functionally, catalyzes the dephosphorylation of undecaprenyl diphosphate (UPP). Confers resistance to bacitracin. This is Undecaprenyl-diphosphatase from Pseudomonas putida (strain W619).